We begin with the raw amino-acid sequence, 453 residues long: Proton extrusion protein PxcA (453 aa).

Residues 147 to 189 (SQDKETQTLDNKSTNQTNSKLSNNNKISSGQNDSRLESASQKT) are disordered. Residues 154–163 (TLDNKSTNQT) are compositionally biased toward polar residues. A compositionally biased stretch (low complexity) spans 164–175 (NSKLSNNNKISS). Positions 176–189 (GQNDSRLESASQKT) are enriched in polar residues. 4 helical membrane passes run 235 to 255 (FILLLIIVPLLTHQLTKTFLL), 330 to 350 (SIGNVFADLFSVTAFAIVIVS), 377 to 397 (LIILFTDMFVGFHSPHGWEVI), and 413 to 433 (FNFLFIATFPVILDTVLKYWI).

It belongs to the CemA family.

The protein localises to the cell inner membrane. Required for H(+) efflux immediately after light irradiation to form a rapid H(+) concentration gradient across the thylakoid membranes. Together with PxcL, contributes to transient H(+) uptake following dark to light transition. The chain is Proton extrusion protein PxcA from Crocosphaera subtropica (strain ATCC 51142 / BH68) (Cyanothece sp. (strain ATCC 51142)).